The primary structure comprises 357 residues: Protein-glutamate methylesterase/protein-glutamine glutaminase (357 aa).

Residues 3–120 (RVLVVDDSAF…SIDLYKVRDM (118 aa)) enclose the Response regulatory domain. Asp54 carries the post-translational modification 4-aspartylphosphate. The 195-residue stretch at 161-355 (FRAGKQLICI…AAIMTYMKKE (195 aa)) folds into the CheB-type methylesterase domain. Catalysis depends on residues Ser173, His200, and Asp296.

It belongs to the CheB family. Phosphorylated by CheA. Phosphorylation of the N-terminal regulatory domain activates the methylesterase activity.

It is found in the cytoplasm. It carries out the reaction [protein]-L-glutamate 5-O-methyl ester + H2O = L-glutamyl-[protein] + methanol + H(+). The enzyme catalyses L-glutaminyl-[protein] + H2O = L-glutamyl-[protein] + NH4(+). Its function is as follows. Involved in chemotaxis. Part of a chemotaxis signal transduction system that modulates chemotaxis in response to various stimuli. Catalyzes the demethylation of specific methylglutamate residues introduced into the chemoreceptors (methyl-accepting chemotaxis proteins or MCP) by CheR. Also mediates the irreversible deamidation of specific glutamine residues to glutamic acid. This is Protein-glutamate methylesterase/protein-glutamine glutaminase from Bacillus licheniformis (strain ATCC 14580 / DSM 13 / JCM 2505 / CCUG 7422 / NBRC 12200 / NCIMB 9375 / NCTC 10341 / NRRL NRS-1264 / Gibson 46).